The chain runs to 323 residues: tRNA-dihydrouridine(20/20a) synthase (323 aa).

Residues 14–16 (PML) and Gln-66 each bind FMN. The active-site Proton donor is Cys-96. FMN is bound by residues Lys-135, His-166, 206 to 208 (NGG), and 228 to 229 (GR).

The protein belongs to the Dus family. DusA subfamily. The cofactor is FMN.

The enzyme catalyses 5,6-dihydrouridine(20) in tRNA + NADP(+) = uridine(20) in tRNA + NADPH + H(+). The catalysed reaction is 5,6-dihydrouridine(20) in tRNA + NAD(+) = uridine(20) in tRNA + NADH + H(+). It catalyses the reaction 5,6-dihydrouridine(20a) in tRNA + NADP(+) = uridine(20a) in tRNA + NADPH + H(+). It carries out the reaction 5,6-dihydrouridine(20a) in tRNA + NAD(+) = uridine(20a) in tRNA + NADH + H(+). Functionally, catalyzes the synthesis of 5,6-dihydrouridine (D), a modified base found in the D-loop of most tRNAs, via the reduction of the C5-C6 double bond in target uridines. Specifically modifies U20 and U20a in tRNAs. The sequence is that of tRNA-dihydrouridine(20/20a) synthase from Haemophilus ducreyi (strain 35000HP / ATCC 700724).